The primary structure comprises 166 residues: Large ribosomal subunit protein uL10 (166 aa).

The protein belongs to the universal ribosomal protein uL10 family. Part of the ribosomal stalk of the 50S ribosomal subunit. The N-terminus interacts with L11 and the large rRNA to form the base of the stalk. The C-terminus forms an elongated spine to which L12 dimers bind in a sequential fashion forming a multimeric L10(L12)X complex.

Functionally, forms part of the ribosomal stalk, playing a central role in the interaction of the ribosome with GTP-bound translation factors. The sequence is that of Large ribosomal subunit protein uL10 from Pseudomonas fluorescens (strain Pf0-1).